A 512-amino-acid chain; its full sequence is ADP,ATP carrier protein 4 (512 aa).

11 consecutive transmembrane segments (helical) span residues Ile-34–Ile-54, Ile-71–Val-91, Ile-102–Phe-122, Phe-157–Trp-177, Phe-192–Glu-212, Phe-231–Ile-251, Leu-296–Lys-316, Ala-330–Leu-350, Phe-361–Val-381, Leu-390–Ile-410, and Ser-476–Thr-496.

This sequence belongs to the ADP/ATP translocase tlc family.

The protein resides in the cell membrane. Provides the rickettsial cell with host ATP in exchange for rickettsial ADP. This is an obligate exchange system. This energy acquiring activity is an important component of rickettsial parasitism. This is ADP,ATP carrier protein 4 (tlcD) from Rickettsia prowazekii (strain Madrid E).